The primary structure comprises 481 residues: Abietadienol/abietadienal oxidase (481 aa).

Residues 2-22 (ADQISLLLVVFTAAVALLHLI) form a helical membrane-spanning segment. C430 lines the heme pocket.

This sequence belongs to the cytochrome P450 family. It depends on heme as a cofactor. Expressed in young tissues such as flushing buds and green bark tissues. Lower levels in mature needles and bark.

The protein resides in the membrane. It carries out the reaction abieta-7,13-dien-18-ol + 2 reduced [NADPH--hemoprotein reductase] + 2 O2 = abieta-7,13-dien-18-oate + 2 oxidized [NADPH--hemoprotein reductase] + 3 H2O + 3 H(+). Its function is as follows. Multifunctional and multisubstrate cytochrome P450 that oxidizes the respective carbon 18 of abietadienol, abietadienal, levopimaradienol, isopimara-7,15-dienol, isopimara-7,15-dienal, dehydroabietadienol, and dehydroabietadienal. The sequence is that of Abietadienol/abietadienal oxidase (CYP720B1) from Pinus taeda (Loblolly pine).